A 261-amino-acid polypeptide reads, in one-letter code: Small ribosomal subunit protein eS1z (261 aa).

The span at 1–18 (MAVGKNKRISKGKKGGKK) shows a compositional bias: basic residues. The tract at residues 1–20 (MAVGKNKRISKGKKGGKKKA) is disordered.

The protein belongs to the eukaryotic ribosomal protein eS1 family. In terms of assembly, component of the small ribosomal subunit. Mature ribosomes consist of a small (40S) and a large (60S) subunit. The 40S subunit contains about 33 different proteins and 1 molecule of RNA (18S). The 60S subunit contains about 49 different proteins and 3 molecules of RNA (25S, 5.8S and 5S).

The protein resides in the cytoplasm. The sequence is that of Small ribosomal subunit protein eS1z from Vitis vinifera (Grape).